The primary structure comprises 573 residues: Putative ABC transporter ATP-binding protein LJ_1704 (573 aa).

ABC transporter domains follow at residues 6–247 and 303–536; these read IEFK…GVRE and LKLD…ASLK. ATP-binding positions include 40–47 and 337–344; these read GPSGSGKS and GQNGAGKT.

Belongs to the ABC transporter superfamily.

The protein localises to the cell membrane. In terms of biological role, probably part of an ABC transporter complex. Responsible for energy coupling to the transport system. The polypeptide is Putative ABC transporter ATP-binding protein LJ_1704 (Lactobacillus johnsonii (strain CNCM I-12250 / La1 / NCC 533)).